Here is a 538-residue protein sequence, read N- to C-terminus: Myeloid cell nuclear differentiation antigen-like protein (538 aa).

The region spanning 1–87 (MAEYKKIVLL…AKKLKTEKAK (87 aa)) is the Pyrin domain. A disordered region spans residues 120-306 (SYKSVPSSKK…PQPQNQNIPR (187 aa)). Composition is skewed to basic and acidic residues over residues 135 to 153 (AKTEGEKKNKLTQDQDHLP) and 245 to 262 (RREEETGVKKSKAAKEPD). Residues 276–305 (SPILHSSSSASSNIPSATNQKPQPQNQNIP) are compositionally biased toward low complexity. Residues 299-499 (PQNQNIPRGA…CGDHSFVKIK (201 aa)) form the HIN-200 domain.

The protein belongs to the HIN-200 family. Highest expression observed in spleen and thymus with moderate levels in bone marrow, lung, skin and heart, low levels in muscle, liver and intestine and little or no expression in brain and pancreas.

It is found in the nucleus. In terms of biological role, suppresses cell growth when expressed ectopically. This is Myeloid cell nuclear differentiation antigen-like protein from Mus musculus (Mouse).